Consider the following 73-residue polypeptide: Neuropeptide-like protein 29 (73 aa).

The N-terminal stretch at 1–22 (MISTSSILVLVVLLACFMAASA) is a signal peptide. 5 positions are modified to tyrosine amide: Tyr29, Tyr39, Tyr47, Tyr55, and Tyr63. A Tryptophan amide modification is found at Trp71.

The protein belongs to the YARP (YGGW-amide related peptide) family. As to expression, weakly or not expressed in absence of infection. Upon infection by D.coniospora, it is expressed in hypoderm. Also expressed in perivulval cells when D.coniospora spores adhere to this region. Expressed in hypodermis upon physical injury.

The protein resides in the secreted. Its function is as follows. Antimicrobial peptides that have antibacterial activity against the Gram-negative bacteria S.marcescens. Has antifungal activity against D.coniospora. May play a role in response to physical injury and osmotic stress. Through the neuropeptide receptor nlp-29, induces sleep upon activation of the innate immune response to molting and injury to the adult epidermis. This is Neuropeptide-like protein 29 from Caenorhabditis elegans.